Consider the following 27-residue polypeptide: Bombinin-like peptide 2 (27 aa).

An Asparagine amide modification is found at Asn-27.

The protein belongs to the bombinin family. Expressed by the skin glands.

It localises to the secreted. In terms of biological role, has antimicrobial activity, but no hemolytic activity. Preference on killing Gram-negative non-enteric bacteria. The polypeptide is Bombinin-like peptide 2 (Bombina orientalis (Oriental fire-bellied toad)).